The primary structure comprises 576 residues: Proton pump-interactor 3B (576 aa).

A disordered region spans residues 34–63; it reads SEVTTDEEEDTIFSGGDSSSGLAAEEDSSG. Coiled coils occupy residues 132–155 and 205–241; these read RMVIEEKKKEFDTLLEALRNLRCT and EKEASINRVKSMALELNEVKNELDAITWKINDLSDKL. Over residues 369 to 381 the composition is skewed to basic and acidic residues; the sequence is RSEKVHKMNREDS. Residues 369–395 are disordered; that stretch reads RSEKVHKMNREDSSSNSSEDGNVITDK. Positions 411 to 467 form a coiled coil; that stretch reads KKKEEEIDEEALKERKREEQLEKARLVMERKRKLQEKAAAKAAIRAQKEAEKKLKAI. Residues 555–575 traverse the membrane as a helical segment; sequence WVWGLSSAALAVSLVLVVLLL.

Belongs to the plant Proton pump-interactor protein family.

It localises to the cell membrane. The protein resides in the endoplasmic reticulum membrane. Functionally, may regulate plasma membrane ATPase activity. This Arabidopsis thaliana (Mouse-ear cress) protein is Proton pump-interactor 3B (PPI3B).